Consider the following 102-residue polypeptide: Small ribosomal subunit protein uS10 (102 aa).

Belongs to the universal ribosomal protein uS10 family. In terms of assembly, part of the 30S ribosomal subunit.

Involved in the binding of tRNA to the ribosomes. This Clostridium acetobutylicum (strain ATCC 824 / DSM 792 / JCM 1419 / IAM 19013 / LMG 5710 / NBRC 13948 / NRRL B-527 / VKM B-1787 / 2291 / W) protein is Small ribosomal subunit protein uS10.